The sequence spans 374 residues: CMP-N-acetylneuraminate-beta-1,4-galactoside alpha-2,3-sialyltransferase (374 aa).

The Cytoplasmic segment spans residues 1 to 8 (MGLLVFVR). The chain crosses the membrane as a helical; Signal-anchor for type II membrane protein span at residues 9–28 (NLLLALCLFLVLGFLYYSAW). The Lumenal portion of the chain corresponds to 29–374 (KLHLLQWEDS…RVITDLSSGI (346 aa)). N-linked (GlcNAc...) asparagine glycosylation is found at asparagine 79 and asparagine 170. Cysteine 159 and cysteine 313 are oxidised to a cystine.

The protein belongs to the glycosyltransferase 29 family. In terms of tissue distribution, found in all tissues tested. High expression found in brain, liver, kidney, colon, heart and spleen.

It localises to the membrane. The protein resides in the golgi apparatus. The protein localises to the golgi stack membrane. It carries out the reaction a beta-D-galactosyl-(1-&gt;4)-N-acetyl-beta-D-glucosaminyl derivative + CMP-N-acetyl-beta-neuraminate = an N-acetyl-alpha-neuraminyl-(2-&gt;3)-beta-D-galactosyl-(1-&gt;4)-N-acetyl-beta-D-glucosaminyl derivative + CMP + H(+). The protein operates within protein modification; protein glycosylation. In terms of biological role, catalyzes the formation of the NeuAc-alpha-2,3-Gal-beta-1,4-GlcNAc-, NeuAc-alpha-2,3-Gal-beta-1,3-GlcNAc- and NeuAc-alpha-2,3-Gal-beta-1,3-GalNAc- sequences found in terminal carbohydrate groups of glycoproteins and glycolipids. The highest activity is toward Gal-beta-1,3-GlcNAc and the lowest toward Gal-beta-1,3-GalNAc. This chain is CMP-N-acetylneuraminate-beta-1,4-galactoside alpha-2,3-sialyltransferase (St3gal3), found in Mus musculus (Mouse).